Here is a 118-residue protein sequence, read N- to C-terminus: NADH-ubiquinone oxidoreductase chain 3 (118 aa).

3 helical membrane passes run 9–29 (IYLVISLLVSLILLGVPFLFA), 62–82 (LVSILFIIFDLEVTFFFPWAV), and 87–107 (IDLFGFWSMMAFLLILTIGFL).

It belongs to the complex I subunit 3 family.

The protein resides in the mitochondrion membrane. The catalysed reaction is a ubiquinone + NADH + 5 H(+)(in) = a ubiquinol + NAD(+) + 4 H(+)(out). Functionally, core subunit of the mitochondrial membrane respiratory chain NADH dehydrogenase (Complex I) that is believed to belong to the minimal assembly required for catalysis. Complex I functions in the transfer of electrons from NADH to the respiratory chain. The immediate electron acceptor for the enzyme is believed to be ubiquinone. This is NADH-ubiquinone oxidoreductase chain 3 (ND3) from Triticum aestivum (Wheat).